The sequence spans 573 residues: Oxygen sensor histidine kinase response regulator DosT (573 aa).

2 GAF domains span residues 61-198 and 229-366; these read KLDA…GIAV and DPAM…ALAW. Histidine 147 is a binding site for heme. One can recognise a Histidine kinase domain in the interval 380 to 573; sequence ILTDRDRIAR…TLLRWSAPLR (194 aa). Phosphohistidine; by autocatalysis is present on histidine 392.

It depends on Mg(2+) as a cofactor. Heme serves as cofactor.

The protein resides in the cytoplasm. In terms of biological role, interacts with the two-component regulatory system DevR/DevS (DosR/DosS) involved in onset of the dormancy response. Required for full induction of the DevR (DosR) regulon; required during early adaptation to anaerobiosis, to start induction of the DevR regulon. May act as a direct hypoxia/oxygen sensor. May be the secondary sensor for CO. Donates a phosphate group to DevR (DosR). The sequence is that of Oxygen sensor histidine kinase response regulator DosT (dosT) from Mycobacterium tuberculosis (strain CDC 1551 / Oshkosh).